A 304-amino-acid polypeptide reads, in one-letter code: Syntaxin-132 (304 aa).

N-acetylmethionine is present on Met-1. The interval 1–30 (MNDLLKGSFELPRGQSSREGDVELGEQQGG) is disordered. The Cytoplasmic portion of the chain corresponds to 1-275 (MNDLLKGSFE…AKSLQKNSRK (275 aa)). Coiled-coil stretches lie at residues 34–67 (LEDF…ESKS) and 129–162 (TLSL…DRRV). One can recognise a t-SNARE coiled-coil homology domain in the interval 204–266 (LAEIQERHDA…QSGNTALQRA (63 aa)). A helical; Anchor for type IV membrane protein transmembrane segment spans residues 276-296 (WMCIAIIILLIVVAVIVVGVL). Residues 297–304 (KPWKNKSA) are Vesicular-facing.

Belongs to the syntaxin family. In terms of assembly, part of the t-SNARE complex. In terms of tissue distribution, widely expressed in all tissues throughout plant development.

It localises to the cell membrane. In terms of biological role, vesicle trafficking protein that functions in the secretory pathway. Acts in coordination with SYP123 to mediate tip-focused membrane trafficking for root hair tip growth. Functions in root hair elongation by forming SNARE complexes with VAMP721,VAMP722 or VAMP724. Involved in cytokinesis. Acts as a cell plate-specific syntaxin, required for the fusion of vesicles at the plane of cell division. Required for secretory trafficking to the plasma membrane during interphase. Involved in the regulation of density of the H(+) ATPase proteins at the plasma membrane of root and shoot in epidermal cells. Modulation of SYP132 expression by auxin affects clathrin-sensitive H(+) ATPase traffic from the plasma membrane, and influences apoplastic acidification and plant growth. The chain is Syntaxin-132 from Arabidopsis thaliana (Mouse-ear cress).